The primary structure comprises 180 residues: Threonylcarbamoyl-AMP synthase (180 aa).

The 180-residue stretch at 1-180 (MRARALQHFL…DLITGAIVRP (180 aa)) folds into the YrdC-like domain.

It belongs to the SUA5 family. TsaC subfamily.

It is found in the cytoplasm. The catalysed reaction is L-threonine + hydrogencarbonate + ATP = L-threonylcarbamoyladenylate + diphosphate + H2O. Required for the formation of a threonylcarbamoyl group on adenosine at position 37 (t(6)A37) in tRNAs that read codons beginning with adenine. Catalyzes the conversion of L-threonine, HCO(3)(-)/CO(2) and ATP to give threonylcarbamoyl-AMP (TC-AMP) as the acyladenylate intermediate, with the release of diphosphate. This is Threonylcarbamoyl-AMP synthase from Methylobacillus flagellatus (strain ATCC 51484 / DSM 6875 / VKM B-1610 / KT).